The chain runs to 417 residues: Serpin A9 (417 aa).

The first 23 residues, 1–23 (MASYLYGVLFAVGLCAPIYCVSP), serve as a signal peptide directing secretion. N-linked (GlcNAc...) asparagine glycosylation is found at Asn-101 and Asn-390.

It belongs to the serpin family. As to expression, highly expressed in normal germinal center (GC) B-cells and GC B-cell-derived malignancies.

It is found in the secreted. Its subcellular location is the cytoplasm. The protein localises to the membrane. Functionally, protease inhibitor that inhibits trypsin and trypsin-like serine proteases (in vitro). Inhibits plasmin and thrombin with lower efficiency (in vitro). This Homo sapiens (Human) protein is Serpin A9 (SERPINA9).